Reading from the N-terminus, the 163-residue chain is ATP synthase subunit b', chloroplastic (163 aa).

Residues 26–46 traverse the membrane as a helical segment; that stretch reads ATLPLMALQFILLTVILTFVF.

It belongs to the ATPase B chain family. In terms of assembly, F-type ATPases have 2 components, F(1) - the catalytic core - and F(0) - the membrane proton channel. F(1) has five subunits: alpha(3), beta(3), gamma(1), delta(1), epsilon(1). F(0) has four main subunits: a(1), b(1), b'(1) and c(10-14). The alpha and beta chains form an alternating ring which encloses part of the gamma chain. F(1) is attached to F(0) by a central stalk formed by the gamma and epsilon chains, while a peripheral stalk is formed by the delta, b and b' chains.

The protein resides in the plastid. The protein localises to the chloroplast thylakoid membrane. Its function is as follows. F(1)F(0) ATP synthase produces ATP from ADP in the presence of a proton or sodium gradient. F-type ATPases consist of two structural domains, F(1) containing the extramembraneous catalytic core and F(0) containing the membrane proton channel, linked together by a central stalk and a peripheral stalk. During catalysis, ATP synthesis in the catalytic domain of F(1) is coupled via a rotary mechanism of the central stalk subunits to proton translocation. Component of the F(0) channel, it forms part of the peripheral stalk, linking F(1) to F(0). The b'-subunit is a diverged and duplicated form of b found in plants and photosynthetic bacteria. The chain is ATP synthase subunit b', chloroplastic from Ochrosphaera neapolitana.